Reading from the N-terminus, the 143-residue chain is Host transcription reprogramming factor 8 (143 aa).

An N-terminal signal peptide occupies residues 1–19 (MHTYKFIQIALLFASVALA). A compositionally biased stretch (pro residues) spans 24–34 (PSPPNPPPVPQ). The disordered stretch occupies residues 24-43 (PSPPNPPPVPQLPNSETKSN). The segment at 48–71 (HSCEFCGVVKPSGPAYLEHYHQNH) adopts a C2H2-type 1 zinc-finger fold. The interval 77–99 (GKLATPSPPNPPPVPTQKVETHA) is disordered. A compositionally biased stretch (pro residues) spans 82 to 91 (PSPPNPPPVP). A C2H2-type 2 zinc finger spans residues 103–126 (HGCEWCNKVEPSGPAYIKHYKENH).

It localises to the secreted. It is found in the host nucleus. Probable secreted effector that translocates into the nuclei of host cells to reprogram the expression of targeted genes by binding on effector binding elements in rice. The polypeptide is Host transcription reprogramming factor 8 (Pyricularia oryzae (strain 70-15 / ATCC MYA-4617 / FGSC 8958) (Rice blast fungus)).